The following is a 354-amino-acid chain: Uroporphyrinogen decarboxylase (354 aa).

Substrate is bound by residues 27–31 (RQAGR), aspartate 77, tyrosine 154, threonine 209, and histidine 327.

The protein belongs to the uroporphyrinogen decarboxylase family. As to quaternary structure, homodimer.

The protein resides in the cytoplasm. It catalyses the reaction uroporphyrinogen III + 4 H(+) = coproporphyrinogen III + 4 CO2. It participates in porphyrin-containing compound metabolism; protoporphyrin-IX biosynthesis; coproporphyrinogen-III from 5-aminolevulinate: step 4/4. Functionally, catalyzes the decarboxylation of four acetate groups of uroporphyrinogen-III to yield coproporphyrinogen-III. In Citrobacter koseri (strain ATCC BAA-895 / CDC 4225-83 / SGSC4696), this protein is Uroporphyrinogen decarboxylase.